The following is a 454-amino-acid chain: tRNA modification GTPase MnmE (454 aa).

Positions 23, 80, and 120 each coordinate (6S)-5-formyl-5,6,7,8-tetrahydrofolate. The region spanning 216-377 is the TrmE-type G domain; that stretch reads GMKVVIAGRP…LRNHLKQSMG (162 aa). Residue Asn226 coordinates K(+). Residues 226 to 231, 245 to 251, 270 to 273, 335 to 338, and 358 to 360 each bind GTP; these read NAGKSS, TDIAGTT, DTAG, NKAD, and SAR. Ser230 serves as a coordination point for Mg(2+). Residues Thr245, Ile247, and Thr250 each coordinate K(+). Thr251 is a binding site for Mg(2+). Lys454 provides a ligand contact to (6S)-5-formyl-5,6,7,8-tetrahydrofolate.

This sequence belongs to the TRAFAC class TrmE-Era-EngA-EngB-Septin-like GTPase superfamily. TrmE GTPase family. In terms of assembly, homodimer. Heterotetramer of two MnmE and two MnmG subunits. Requires K(+) as cofactor.

Its subcellular location is the cytoplasm. In terms of biological role, exhibits a very high intrinsic GTPase hydrolysis rate. Involved in the addition of a carboxymethylaminomethyl (cmnm) group at the wobble position (U34) of certain tRNAs, forming tRNA-cmnm(5)s(2)U34. This chain is tRNA modification GTPase MnmE, found in Salmonella arizonae (strain ATCC BAA-731 / CDC346-86 / RSK2980).